The following is a 199-amino-acid chain: 3-isopropylmalate dehydratase small subunit (199 aa).

It belongs to the LeuD family. LeuD type 1 subfamily. In terms of assembly, heterodimer of LeuC and LeuD.

The catalysed reaction is (2R,3S)-3-isopropylmalate = (2S)-2-isopropylmalate. It functions in the pathway amino-acid biosynthesis; L-leucine biosynthesis; L-leucine from 3-methyl-2-oxobutanoate: step 2/4. Catalyzes the isomerization between 2-isopropylmalate and 3-isopropylmalate, via the formation of 2-isopropylmaleate. This Bacillus velezensis (strain DSM 23117 / BGSC 10A6 / LMG 26770 / FZB42) (Bacillus amyloliquefaciens subsp. plantarum) protein is 3-isopropylmalate dehydratase small subunit.